The sequence spans 125 residues: Putative oxygen-evolving enhancer protein 2-2 (125 aa).

Ser15 is subject to Phosphoserine.

Belongs to the PsbP family.

In Arabidopsis thaliana (Mouse-ear cress), this protein is Putative oxygen-evolving enhancer protein 2-2 (PSBP2).